The chain runs to 765 residues: DNA ligase (765 aa).

The tract at residues 1 to 34 (MAGDDEDRAVPAAEGAPPPSALPPVSGLDVKAAE) is disordered. NAD(+) is bound by residues 61-65 (DAEYD), 110-111 (SL), and Glu-144. Lys-146 serves as the catalytic N6-AMP-lysine intermediate. NAD(+) is bound by residues Arg-167, Glu-204, Lys-317, and Lys-341. Positions 446, 449, 464, and 470 each coordinate Zn(2+). A BRCT domain is found at 687-765 (ATDSAIAGKT…EDEWLAIAQG (79 aa)).

The protein belongs to the NAD-dependent DNA ligase family. LigA subfamily. Mg(2+) serves as cofactor. Requires Mn(2+) as cofactor.

It carries out the reaction NAD(+) + (deoxyribonucleotide)n-3'-hydroxyl + 5'-phospho-(deoxyribonucleotide)m = (deoxyribonucleotide)n+m + AMP + beta-nicotinamide D-nucleotide.. Functionally, DNA ligase that catalyzes the formation of phosphodiester linkages between 5'-phosphoryl and 3'-hydroxyl groups in double-stranded DNA using NAD as a coenzyme and as the energy source for the reaction. It is essential for DNA replication and repair of damaged DNA. The sequence is that of DNA ligase from Paracoccus denitrificans (strain Pd 1222).